The sequence spans 391 residues: Shewanella-like protein phosphatase 2 (391 aa).

Asp61, His63, Asp97, and Asn132 together coordinate Mn(2+). Residue His133 is the Proton donor of the active site. His232 and His295 together coordinate Mn(2+).

The protein belongs to the metallophosphoesterase superfamily. SLP family. It depends on Mn(2+) as a cofactor. As to expression, expressed in roots and siliques (at protein level).

It localises to the cytoplasm. The protein localises to the cytosol. Its function is as follows. Shows phosphatase activity, hydrolyzing the artificial substrate para-nitrophenylphosphate (pNPP) in vitro. This chain is Shewanella-like protein phosphatase 2, found in Arabidopsis thaliana (Mouse-ear cress).